Consider the following 498-residue polypeptide: Lysine--tRNA ligase (498 aa).

Residues Glu-409 and Glu-416 each coordinate Mg(2+).

It belongs to the class-II aminoacyl-tRNA synthetase family. In terms of assembly, homodimer. It depends on Mg(2+) as a cofactor.

The protein localises to the cytoplasm. It catalyses the reaction tRNA(Lys) + L-lysine + ATP = L-lysyl-tRNA(Lys) + AMP + diphosphate. In Dichelobacter nodosus (strain VCS1703A), this protein is Lysine--tRNA ligase.